A 205-amino-acid chain; its full sequence is Ribonuclease HII (205 aa).

The region spanning 14–201 is the RNase H type-2 domain; it reads EIVAGVDEAG…KGNINHSAIL (188 aa). Asp20, Glu21, and Asp111 together coordinate a divalent metal cation.

This sequence belongs to the RNase HII family. The cofactor is Mn(2+). Mg(2+) serves as cofactor.

Its subcellular location is the cytoplasm. The enzyme catalyses Endonucleolytic cleavage to 5'-phosphomonoester.. In terms of biological role, endonuclease that specifically degrades the RNA of RNA-DNA hybrids. In Orientia tsutsugamushi (strain Boryong) (Rickettsia tsutsugamushi), this protein is Ribonuclease HII.